A 408-amino-acid chain; its full sequence is Leucine aminopeptidase 1 (408 aa).

The signal sequence occupies residues 1 to 16 (MKVSSAIALLLPVVAA). Residues 17–89 (RFVDSAFEQD…SAQSATTGPA (73 aa)) constitute a propeptide that is removed on maturation. 3 N-linked (GlcNAc...) asparagine glycosylation sites follow: Asn-95, Asn-108, and Asn-182. Residues His-190, Asp-209, Glu-248, and Asp-275 each coordinate Zn(2+). Residues Cys-324 and Cys-328 are joined by a disulfide bond. A Zn(2+)-binding site is contributed by His-357.

The protein belongs to the peptidase M28 family. M28E subfamily. In terms of assembly, monomer. Zn(2+) is required as a cofactor.

Its subcellular location is the secreted. Extracellular aminopeptidase that allows assimilation of proteinaceous substrates. The protein is Leucine aminopeptidase 1 (LAP1) of Grosmannia clavigera (strain kw1407 / UAMH 11150) (Blue stain fungus).